Reading from the N-terminus, the 442-residue chain is MAITVRRSTMVRPAWETPRVRLWNSNLDLVVPRFHTPSVYFYRRGPEGGGAPEGFFDGERMRRALAEALVPFYPMAGRLARDEDGRVEIDCNGEGVLFVEADAPDASVDDYGDFAPTMELKRLIPAVDYTDDISSFSLLVLQVTYFKCGGVSLGVGMQHHVADGMSGLHFINSWSDLCRGTQIAIMPFIDRTLLRARDPPTPSYPHVEYQPAPAMLSSVPQSVTANKTTPPPTAVDIFKLTRSDLGRLRSQLPSGEGAPRFSTYAVLAAHVWRCVSLARGLPSEQPTKLYCATDGRQRLQPPLPEGYFGNVIFTATPLAEAGKVTSGLADGAAVIQEALDRMNDSYCRSALDYLELQPDLSALVRGAHTFRCPNLGLTSWVRLPIHDADFGWGRPVFMGPGGIAYEGLAFVLPSANKDGSLSIAISLQAEHMEKFRKLIFEV.

Active-site proton acceptor residues include His159 and Asp389.

It belongs to the plant acyltransferase family. As to expression, expressed in roots, leaves, stems and seeds.

Hydroxycinnamoyl transferase that catalyzes the transfer of an acyl from p-coumaryol-CoA to various acyl acceptors. Can use feruloyl-CoA and caffeoyl-CoA as acyl donors. This Oryza sativa subsp. japonica (Rice) protein is Hydroxycinnamoyltransferase 1.